The following is a 413-amino-acid chain: Cis,cis-muconate transport protein (413 aa).

At 1 to 16 the chain is on the cytoplasmic side; the sequence is MYSNNQRSRIGSHTWK. A helical transmembrane segment spans residues 17–37; the sequence is IAFLFAFLALLVDGADLMLLS. Residues 38-53 are Periplasmic-facing; the sequence is YSLNSIKAEFNLSTVE. A helical membrane pass occupies residues 54 to 74; sequence AGMLGSFTLAGMAIGGIFGGW. Over 75-85 the chain is Cytoplasmic; sequence ACDRFGRVRIV. A helical transmembrane segment spans residues 86 to 106; the sequence is VISILTFSILTCGLGLTQSFI. Residues 107 to 112 are Periplasmic-facing; the sequence is QFGVLR. The helical transmembrane segment at 113 to 133 threads the bilayer; sequence FFASLGLGSLYIACNTLMAEY. Residues 134-145 are Cytoplasmic-facing; the sequence is VPTKYRTTVLGT. The chain crosses the membrane as a helical span at residues 146 to 166; it reads LQAGWTVGYIVATLLAGWLIP. Residues 167 to 171 lie on the Periplasmic side of the membrane; that stretch reads DHGWR. The chain crosses the membrane as a helical span at residues 172–192; it reads VLFYVAIIPVLMAVLMHFFVP. Topologically, residues 193 to 228 are cytoplasmic; sequence EPAAWQQSRLAPSKQTETVKTSAFKLIFQDKRNRNM. A helical transmembrane segment spans residues 229-249; sequence FILWALTAGFLQFGYYGVNNW. The Periplasmic segment spans residues 250–266; the sequence is MPSYLESELGMKFKEMT. A helical membrane pass occupies residues 267-287; it reads AYMVGTYTAMILGKILAGFMA. At 288–293 the chain is on the cytoplasmic side; sequence DKLGRR. The chain crosses the membrane as a helical span at residues 294–314; sequence FTYAFGAIGTAIFLPLIVFYN. The Periplasmic portion of the chain corresponds to 315–318; the sequence is SPDN. Residues 319 to 339 form a helical membrane-spanning segment; the sequence is ILYLLVIFGFLYGIPYGVNAT. Topologically, residues 340–352 are cytoplasmic; that stretch reads YMTESFPTAIRGT. Residues 353–376 traverse the membrane as a helical segment; it reads AIGGAYNVGRLGAAIAPATIGFLA. The Periplasmic portion of the chain corresponds to 377–382; the sequence is SGGSIG. The chain crosses the membrane as a helical span at residues 383 to 403; sequence LGFVVMGAAYFICGVIPALFI. Residues 404 to 413 are Cytoplasmic-facing; it reads KEKQYDPQQS.

The protein belongs to the major facilitator superfamily. Aromatic acid:H(+) symporter (AAHS) (TC 2.A.1.15) family.

The protein resides in the cell inner membrane. Its function is as follows. Probable uptake of muconate. This chain is Cis,cis-muconate transport protein (mucK), found in Acinetobacter baylyi (strain ATCC 33305 / BD413 / ADP1).